Consider the following 273-residue polypeptide: Glutamate 5-kinase (273 aa).

Residue lysine 15 coordinates ATP. The substrate site is built by serine 55, aspartate 142, and asparagine 158. ATP contacts are provided by residues 178–179 and 220–226; these read SD and TGGMLSK.

This sequence belongs to the glutamate 5-kinase family.

The protein localises to the cytoplasm. It catalyses the reaction L-glutamate + ATP = L-glutamyl 5-phosphate + ADP. It participates in amino-acid biosynthesis; L-proline biosynthesis; L-glutamate 5-semialdehyde from L-glutamate: step 1/2. In terms of biological role, catalyzes the transfer of a phosphate group to glutamate to form L-glutamate 5-phosphate. The polypeptide is Glutamate 5-kinase (Streptococcus pyogenes serotype M4 (strain MGAS10750)).